A 384-amino-acid chain; its full sequence is MSLLDLPTLWNASGVEALDSDLFEYFCCVASGSLPTFGHDATALRNILVRTALEGETASAAAVLQALLAFSSLHRYGLQPQALELKITALGSLAKGSFTPGLGTKETIEHIAAGMLLSSFEVHQSSCTSGHWTGYLGGVKTITDMSSVKTLLQFSSDVAVLLDWVHYHNVLARFSLLYWNGEETSEFPSTPTNLLSSQDSSLPPPIYSMMDLLSQICDLSNSAIPTGTSDEVDNYKGFLKVLDWRIRSLPIKGDNDGEMLLMKLYQLALLLFLNRSFEGLIDQPIRMQQQIGQAFAILPRLSSCRQQFPIYVIGCEARTDEQRAAVLDLITKTEKMSTSRSFNHCRTLLQAVWTQDDLAEWDDISYRAKLTLVISRCAVAPIFV.

The protein resides in the nucleus. Its function is as follows. Transcription factor; part of the gene cluster that mediates the biosynthesis of iso-A82775C, a enylepoxycyclohexane and biosynthetic precursor of the chloropestolide anticancer natural products. This is Transcription factor iacI from Pestalotiopsis fici (strain W106-1 / CGMCC3.15140).